The primary structure comprises 127 residues: uncharacterized protein (127 aa).

This is an uncharacterized protein from Archaeoglobus fulgidus (strain ATCC 49558 / DSM 4304 / JCM 9628 / NBRC 100126 / VC-16).